A 271-amino-acid polypeptide reads, in one-letter code: Phosphatidylglycerol--prolipoprotein diacylglyceryl transferase (271 aa).

7 helical membrane-spanning segments follow: residues 25 to 45 (WYGI…KFFV), 60 to 80 (YFIW…ILIY), 103 to 123 (FVGI…IATL), 134 to 154 (WIFL…GRIG), 181 to 201 (PSQL…VYLA), 209 to 229 (GELI…CEFY), and 235 to 255 (GIGF…IMFI). R152 contributes to the a 1,2-diacyl-sn-glycero-3-phospho-(1'-sn-glycerol) binding site.

Belongs to the Lgt family.

The protein localises to the cell inner membrane. It catalyses the reaction L-cysteinyl-[prolipoprotein] + a 1,2-diacyl-sn-glycero-3-phospho-(1'-sn-glycerol) = an S-1,2-diacyl-sn-glyceryl-L-cysteinyl-[prolipoprotein] + sn-glycerol 1-phosphate + H(+). The protein operates within protein modification; lipoprotein biosynthesis (diacylglyceryl transfer). In terms of biological role, catalyzes the transfer of the diacylglyceryl group from phosphatidylglycerol to the sulfhydryl group of the N-terminal cysteine of a prolipoprotein, the first step in the formation of mature lipoproteins. The protein is Phosphatidylglycerol--prolipoprotein diacylglyceryl transferase of Campylobacter jejuni subsp. jejuni serotype O:23/36 (strain 81-176).